The sequence spans 164 residues: NADH-quinone oxidoreductase subunit I (164 aa).

2 consecutive 4Fe-4S ferredoxin-type domains span residues 54–84 (LRRY…IEAG) and 95–124 (VRYD…EGPN). Residues C64, C67, C70, C74, C104, C107, C110, and C114 each contribute to the [4Fe-4S] cluster site.

It belongs to the complex I 23 kDa subunit family. As to quaternary structure, NDH-1 is composed of 14 different subunits. Subunits NuoA, H, J, K, L, M, N constitute the membrane sector of the complex. Requires [4Fe-4S] cluster as cofactor.

It localises to the cell inner membrane. The catalysed reaction is a quinone + NADH + 5 H(+)(in) = a quinol + NAD(+) + 4 H(+)(out). Functionally, NDH-1 shuttles electrons from NADH, via FMN and iron-sulfur (Fe-S) centers, to quinones in the respiratory chain. The immediate electron acceptor for the enzyme in this species is believed to be ubiquinone. Couples the redox reaction to proton translocation (for every two electrons transferred, four hydrogen ions are translocated across the cytoplasmic membrane), and thus conserves the redox energy in a proton gradient. The sequence is that of NADH-quinone oxidoreductase subunit I from Mesorhizobium japonicum (strain LMG 29417 / CECT 9101 / MAFF 303099) (Mesorhizobium loti (strain MAFF 303099)).